A 423-amino-acid chain; its full sequence is Adenylosuccinate synthetase (423 aa).

The active-site Proton acceptor is aspartate 12. Mg(2+)-binding residues include aspartate 12 and glycine 39. IMP contacts are provided by residues 37–40 (NAGH), threonine 129, arginine 143, asparagine 221, threonine 236, and arginine 300. Residue 39 to 41 (GHS) coordinates GTP. The active-site Proton donor is histidine 40. 296–302 (VSTGRKR) contacts substrate. GTP is bound by residues arginine 302, 328-330 (KLD), and 412-414 (GTG).

The protein belongs to the adenylosuccinate synthetase family. Homodimer. Mg(2+) serves as cofactor.

The protein localises to the cytoplasm. It catalyses the reaction IMP + L-aspartate + GTP = N(6)-(1,2-dicarboxyethyl)-AMP + GDP + phosphate + 2 H(+). Its pathway is purine metabolism; AMP biosynthesis via de novo pathway; AMP from IMP: step 1/2. Plays an important role in the de novo pathway and in the salvage pathway of purine nucleotide biosynthesis. Catalyzes the first committed step in the biosynthesis of AMP from IMP. This is Adenylosuccinate synthetase from Pyricularia oryzae (strain 70-15 / ATCC MYA-4617 / FGSC 8958) (Rice blast fungus).